The primary structure comprises 66 residues: Alpha-like toxin BmK-M7 (66 aa).

In terms of domain architecture, LCN-type CS-alpha/beta spans 2 to 64 (RDGYIALPHN…VPIRVPGRCH (63 aa)). 4 cysteine pairs are disulfide-bonded: C12/C63, C16/C36, C22/C46, and C26/C48.

This sequence belongs to the long (4 C-C) scorpion toxin superfamily. Sodium channel inhibitor family. Alpha subfamily. Expressed by the venom gland.

The protein resides in the secreted. Functionally, alpha toxins bind voltage-independently at site-3 of sodium channels (Nav) and inhibit the inactivation of the activated channels, thereby blocking neuronal transmission. This toxin is active on both mammals and insects. It can be considered as a cardiotoxin, as it can bind to human cardiac sodium channel and modify its normal properties. In Olivierus martensii (Manchurian scorpion), this protein is Alpha-like toxin BmK-M7.